The following is a 775-amino-acid chain: Mitochondrial 15S rRNA processing factor CCM1 (775 aa).

The N-terminal 18 residues, 1–18, are a transit peptide targeting the mitochondrion; it reads MLRYARTVRFSQVGNSVR. Residues 35 to 65 form a disordered region; the sequence is HDRKSPSHSLSPISNLPNHNDSSTERARKTL. The span at 41–55 shows a compositional bias: polar residues; sequence SHSLSPISNLPNHND. Over residues 56 to 65 the composition is skewed to basic and acidic residues; it reads SSTERARKTL. 5 PPR repeats span residues 289–323, 324–355, 362–396, 397–432, and 433–467; these read PKRT…KIEI, SGMA…MRFQ, GTRA…KIEP, NQQI…NWTP, and TLPT…NTVS.

Belongs to the CCM1 family. Binds to mitochondrial small subunit 15S rRNA.

It is found in the mitochondrion. Its function is as follows. Regulates mitochondrial small subunit maturation by controlling 15S rRNA 5'-end processing. Localizes to the 5' precursor of the 15S rRNA in a position that is subsequently occupied by mS47 in the mature yeast mtSSU. Uses structure and sequence-specific RNA recognition, binding to a single-stranded region of the precursor and specifically recognizing bases -6 to -1. The exchange of Ccm1 for mS47 is coupled to the irreversible removal of precursor rRNA that is accompanied by conformational changes of the mitoribosomal proteins uS5m and mS26. These conformational changes signal completion of 5'-end rRNA processing through protection of the mature 5'-end of the 15S rRNA and stabilization of mS47. The removal of the 5' precursor together with the dissociation of Ccm1 may be catalyzed by the 5'-3' exoribonuclease Pet127. Involved in the specific removal of group I introns in mitochondrial encoded transcripts. The sequence is that of Mitochondrial 15S rRNA processing factor CCM1 (CCM1) from Scheffersomyces stipitis (strain ATCC 58785 / CBS 6054 / NBRC 10063 / NRRL Y-11545) (Yeast).